The following is a 466-amino-acid chain: Soluble pyridine nucleotide transhydrogenase (466 aa).

E36 to C45 contributes to the FAD binding site.

This sequence belongs to the class-I pyridine nucleotide-disulfide oxidoreductase family. Homooligomer; probable homooctamer. FAD serves as cofactor.

It is found in the cytoplasm. It catalyses the reaction NAD(+) + NADPH = NADH + NADP(+). Conversion of NADPH, generated by peripheral catabolic pathways, to NADH, which can enter the respiratory chain for energy generation. The protein is Soluble pyridine nucleotide transhydrogenase of Shigella flexneri.